The primary structure comprises 442 residues: tRNA-2-methylthio-N(6)-dimethylallyladenosine synthase (442 aa).

The 118-residue stretch at 3 to 120 folds into the MTTase N-terminal domain; that stretch reads KKLYIETHGC…LPEMIDAARI (118 aa). Residues C12, C49, C83, C157, C161, and C164 each contribute to the [4Fe-4S] cluster site. The Radical SAM core domain maps to 143-375; sequence RIDGPSAYVS…QHRLNQQGFE (233 aa). One can recognise a TRAM domain in the interval 378–442; sequence RQMVGSVQRI…PHSLRGSLIQ (65 aa).

This sequence belongs to the methylthiotransferase family. MiaB subfamily. As to quaternary structure, monomer. Requires [4Fe-4S] cluster as cofactor.

The protein resides in the cytoplasm. The enzyme catalyses N(6)-dimethylallyladenosine(37) in tRNA + (sulfur carrier)-SH + AH2 + 2 S-adenosyl-L-methionine = 2-methylsulfanyl-N(6)-dimethylallyladenosine(37) in tRNA + (sulfur carrier)-H + 5'-deoxyadenosine + L-methionine + A + S-adenosyl-L-homocysteine + 2 H(+). Functionally, catalyzes the methylthiolation of N6-(dimethylallyl)adenosine (i(6)A), leading to the formation of 2-methylthio-N6-(dimethylallyl)adenosine (ms(2)i(6)A) at position 37 in tRNAs that read codons beginning with uridine. The polypeptide is tRNA-2-methylthio-N(6)-dimethylallyladenosine synthase (Pseudomonas fluorescens (strain Pf0-1)).